The following is a 368-amino-acid chain: Large ribosomal subunit protein mL46 (368 aa).

The segment at 53-81 (TATATTTTTLPPPHPPVTTSTGTHAATST) is disordered. Positions 69 to 81 (VTTSTGTHAATST) are enriched in low complexity.

This sequence belongs to the mitochondrion-specific ribosomal protein mL46 family. In terms of assembly, component of the mitochondrial large ribosomal subunit (mt-LSU). Mature N.crassa 74S mitochondrial ribosomes consist of a small (37S) and a large (54S) subunit. The 37S small subunit contains a 16S ribosomal RNA (16S mt-rRNA) and 32 different proteins. The 54S large subunit contains a 23S rRNA (23S mt-rRNA) and 42 different proteins.

Its subcellular location is the mitochondrion. Functionally, component of the mitochondrial ribosome (mitoribosome), a dedicated translation machinery responsible for the synthesis of mitochondrial genome-encoded proteins, including at least some of the essential transmembrane subunits of the mitochondrial respiratory chain. The mitoribosomes are attached to the mitochondrial inner membrane and translation products are cotranslationally integrated into the membrane. The chain is Large ribosomal subunit protein mL46 (mrpl17) from Neurospora crassa (strain ATCC 24698 / 74-OR23-1A / CBS 708.71 / DSM 1257 / FGSC 987).